A 307-amino-acid polypeptide reads, in one-letter code: Tyrosine recombinase XerC (307 aa).

Residues 6–89 enclose the Core-binding (CB) domain; sequence HNTLQTVNTF…TLRTFFRYLM (84 aa). Residues 110 to 293 enclose the Tyr recombinase domain; it reads RLPKALDVDQ…DFQHLAQVYD (184 aa). Catalysis depends on residues Arg151, Lys175, His245, Arg248, and His271. Tyr280 functions as the O-(3'-phospho-DNA)-tyrosine intermediate in the catalytic mechanism.

It belongs to the 'phage' integrase family. XerC subfamily. As to quaternary structure, forms a cyclic heterotetrameric complex composed of two molecules of XerC and two molecules of XerD.

The protein localises to the cytoplasm. Site-specific tyrosine recombinase, which acts by catalyzing the cutting and rejoining of the recombining DNA molecules. The XerC-XerD complex is essential to convert dimers of the bacterial chromosome into monomers to permit their segregation at cell division. It also contributes to the segregational stability of plasmids. In Alcanivorax borkumensis (strain ATCC 700651 / DSM 11573 / NCIMB 13689 / SK2), this protein is Tyrosine recombinase XerC.